We begin with the raw amino-acid sequence, 217 residues long: Protein-L-isoaspartate O-methyltransferase (217 aa).

Serine 64 is an active-site residue.

The protein belongs to the methyltransferase superfamily. L-isoaspartyl/D-aspartyl protein methyltransferase family.

The protein resides in the cytoplasm. The catalysed reaction is [protein]-L-isoaspartate + S-adenosyl-L-methionine = [protein]-L-isoaspartate alpha-methyl ester + S-adenosyl-L-homocysteine. Catalyzes the methyl esterification of L-isoaspartyl residues in peptides and proteins that result from spontaneous decomposition of normal L-aspartyl and L-asparaginyl residues. It plays a role in the repair and/or degradation of damaged proteins. The chain is Protein-L-isoaspartate O-methyltransferase from Rhodopseudomonas palustris (strain BisB5).